Reading from the N-terminus, the 1200-residue chain is ATP-dependent helicase/deoxyribonuclease subunit B (1200 aa).

The protein belongs to the helicase family. AddB/RexB type 2 subfamily. Heterodimer of AddA and RexB. Requires Mg(2+) as cofactor.

Functionally, the heterodimer acts as both an ATP-dependent DNA helicase and an ATP-dependent, dual-direction single-stranded exonuclease. Recognizes the chi site generating a DNA molecule suitable for the initiation of homologous recombination. This subunit has 5' -&gt; 3' nuclease activity but not helicase activity. This chain is ATP-dependent helicase/deoxyribonuclease subunit B, found in Lactiplantibacillus plantarum (strain ATCC BAA-793 / NCIMB 8826 / WCFS1) (Lactobacillus plantarum).